An 800-amino-acid chain; its full sequence is Metabotropic glutamate receptor-like protein C (800 aa).

The first 21 residues, 1-21 (MKMKIIFLILILIFSINIIKC), serve as a signal peptide directing secretion. Residues 22 to 392 (DKEFKMLTLL…EVEFSQSLQY (371 aa)) lie on the Extracellular side of the membrane. Residues N69, N107, N166, N258, N276, N302, and N345 are each glycosylated (N-linked (GlcNAc...) asparagine). A helical transmembrane segment spans residues 393–413 (GFSITTGVLIAITIIMMLGIV). Residues 414 to 426 (RYKSTPSIRSASP) lie on the Cytoplasmic side of the membrane. A helical transmembrane segment spans residues 427–447 (IFLNFILAGGIIVYIGIIVWV). Residues 448–463 (GPANDHQCNARLWLVT) lie on the Extracellular side of the membrane. The helical transmembrane segment at 464–484 (LGFSTLIGSLVVKNFRIWLIF) threads the bilayer. Topologically, residues 485 to 499 (DNPELKSISITNYQL) are cytoplasmic. Residues 500 to 520 (FPWVGACLVINIILMSILTSV) traverse the membrane as a helical segment. The Extracellular portion of the chain corresponds to 521–551 (GDLREIDAQGIDSLGKYEFMKVCKMNSSGAS). An N-linked (GlcNAc...) asparagine glycan is attached at N546. A helical membrane pass occupies residues 552–572 (TLYTILAYFAALLLVGVFVSW). At 573 to 586 (KIRIVDIQEFNESK) the chain is on the cytoplasmic side. The chain crosses the membrane as a helical span at residues 587–607 (AIANTLYAISFCLFVIVPLMI). Residues 608–616 (SPQDKQSET) lie on the Extracellular side of the membrane. The chain crosses the membrane as a helical span at residues 617 to 637 (IVLCTAGLFITTAALLIIFTP). Residues 638–800 (KFWRVFTLGD…NDTEEEDKNQ (163 aa)) are Cytoplasmic-facing. 2 disordered regions span residues 658–694 (QSNV…TETS) and 718–800 (EFDD…DKNQ). Over residues 718–732 (EFDDNNIEQDNDNDN) the composition is skewed to acidic residues. A compositionally biased stretch (low complexity) spans 733–774 (DNNNNNNNNNNNNNNNNNNNNNNNNNNNNNNNNNNNNNNNNN). Residues 781–791 (NDEKVEEKQQN) are compositionally biased toward basic and acidic residues.

The protein in the N-terminal section; belongs to the BMP lipoprotein family. It in the C-terminal section; belongs to the G-protein coupled receptor 3 family. GABA-B receptor subfamily.

The protein resides in the membrane. This is Metabotropic glutamate receptor-like protein C (grlC) from Dictyostelium discoideum (Social amoeba).